Reading from the N-terminus, the 315-residue chain is Pantothenate kinase (315 aa).

94–101 contributes to the ATP binding site; it reads GSVAVGKS.

It belongs to the prokaryotic pantothenate kinase family.

Its subcellular location is the cytoplasm. The enzyme catalyses (R)-pantothenate + ATP = (R)-4'-phosphopantothenate + ADP + H(+). It participates in cofactor biosynthesis; coenzyme A biosynthesis; CoA from (R)-pantothenate: step 1/5. The chain is Pantothenate kinase from Shewanella amazonensis (strain ATCC BAA-1098 / SB2B).